The chain runs to 514 residues: Peptide chain release factor 3 (514 aa).

The tr-type G domain maps to 8 to 268 (KKRRTFAIIS…TFLEFAPEPH (261 aa)). Residues 17–24 (SHPDAGKT), 85–89 (DTPGH), and 139–142 (NKLD) each bind GTP.

It belongs to the TRAFAC class translation factor GTPase superfamily. Classic translation factor GTPase family. PrfC subfamily.

It localises to the cytoplasm. In terms of biological role, increases the formation of ribosomal termination complexes and stimulates activities of RF-1 and RF-2. It binds guanine nucleotides and has strong preference for UGA stop codons. It may interact directly with the ribosome. The stimulation of RF-1 and RF-2 is significantly reduced by GTP and GDP, but not by GMP. The chain is Peptide chain release factor 3 from Streptococcus pyogenes serotype M1.